The chain runs to 68 residues: Large ribosomal subunit protein uL30 (68 aa).

It belongs to the universal ribosomal protein uL30 family. In terms of assembly, part of the 50S ribosomal subunit.

The sequence is that of Large ribosomal subunit protein uL30 from Bartonella quintana (strain Toulouse) (Rochalimaea quintana).